We begin with the raw amino-acid sequence, 456 residues long: Cytochrome c biogenesis protein CcsB (456 aa).

3 helical membrane-spanning segments follow: residues 29–49 (LRLA…GTVI), 88–108 (AGWF…CTFR), and 174–194 (VGPI…IWGS).

It belongs to the Ccs1/CcsB family. In terms of assembly, may interact with CcsA.

It is found in the cellular thylakoid membrane. Functionally, required during biogenesis of c-type cytochromes (cytochrome c6 and cytochrome f) at the step of heme attachment. In Synechococcus sp. (strain ATCC 27144 / PCC 6301 / SAUG 1402/1) (Anacystis nidulans), this protein is Cytochrome c biogenesis protein CcsB.